The following is a 339-amino-acid chain: Ketol-acid reductoisomerase (NADP(+)) (339 aa).

Residues methionine 1–threonine 182 form the KARI N-terminal Rossmann domain. NADP(+) is bound by residues tyrosine 24–glutamine 27, arginine 48, serine 51, serine 53, and aspartate 83–glutamine 86. Histidine 108 is an active-site residue. Residue glycine 134 coordinates NADP(+). Positions threonine 183–isoleucine 328 constitute a KARI C-terminal knotted domain. The Mg(2+) site is built by aspartate 191, glutamate 195, glutamate 227, and glutamate 231. Residue serine 252 participates in substrate binding.

This sequence belongs to the ketol-acid reductoisomerase family. Mg(2+) serves as cofactor.

It carries out the reaction (2R)-2,3-dihydroxy-3-methylbutanoate + NADP(+) = (2S)-2-acetolactate + NADPH + H(+). The enzyme catalyses (2R,3R)-2,3-dihydroxy-3-methylpentanoate + NADP(+) = (S)-2-ethyl-2-hydroxy-3-oxobutanoate + NADPH + H(+). Its pathway is amino-acid biosynthesis; L-isoleucine biosynthesis; L-isoleucine from 2-oxobutanoate: step 2/4. The protein operates within amino-acid biosynthesis; L-valine biosynthesis; L-valine from pyruvate: step 2/4. Functionally, involved in the biosynthesis of branched-chain amino acids (BCAA). Catalyzes an alkyl-migration followed by a ketol-acid reduction of (S)-2-acetolactate (S2AL) to yield (R)-2,3-dihydroxy-isovalerate. In the isomerase reaction, S2AL is rearranged via a Mg-dependent methyl migration to produce 3-hydroxy-3-methyl-2-ketobutyrate (HMKB). In the reductase reaction, this 2-ketoacid undergoes a metal-dependent reduction by NADPH to yield (R)-2,3-dihydroxy-isovalerate. The protein is Ketol-acid reductoisomerase (NADP(+)) of Methylobacterium sp. (strain 4-46).